The following is a 197-amino-acid chain: Phosphoheptose isomerase (197 aa).

The SIS domain maps to 40-197; that stretch reads CIASIAQGGK…LVEHSIFGKQ (158 aa). 55-57 is a binding site for substrate; it reads NGG. Residues His64 and Glu68 each coordinate Zn(2+). Substrate contacts are provided by residues Glu68, 97-98, 123-125, Ser128, and Gln175; these read ND and STS. Gln175 and His183 together coordinate Zn(2+).

It belongs to the SIS family. GmhA subfamily. In terms of assembly, homotetramer. Requires Zn(2+) as cofactor.

The protein resides in the cytoplasm. It carries out the reaction 2 D-sedoheptulose 7-phosphate = D-glycero-alpha-D-manno-heptose 7-phosphate + D-glycero-beta-D-manno-heptose 7-phosphate. Its pathway is carbohydrate biosynthesis; D-glycero-D-manno-heptose 7-phosphate biosynthesis; D-glycero-alpha-D-manno-heptose 7-phosphate and D-glycero-beta-D-manno-heptose 7-phosphate from sedoheptulose 7-phosphate: step 1/1. It functions in the pathway capsule biogenesis; capsule polysaccharide biosynthesis. In terms of biological role, catalyzes the isomerization of sedoheptulose 7-phosphate in D-glycero-D-manno-heptose 7-phosphate. The sequence is that of Phosphoheptose isomerase from Burkholderia mallei (strain ATCC 23344).